A 729-amino-acid polypeptide reads, in one-letter code: DNA topoisomerase 3 (729 aa).

A Toprim domain is found at 3 to 136; sequence KKAVLAEKPS…VKRLWISSVT (134 aa). The Mg(2+) site is built by E9 and D105. Residues 153 to 590 form the Topo IA-type catalytic domain; the sequence is YETLYAAAAA…EMKEYAKAVV (438 aa). Residues 187–192 form an interaction with DNA region; the sequence is SCGRVQ. Residue Y311 is the O-(5'-phospho-DNA)-tyrosine intermediate of the active site. A disordered region spans residues 680-708; the sequence is FEQRRKQNKHKNVSKREVQSYMKKQNKQD.

Belongs to the type IA topoisomerase family. Mg(2+) serves as cofactor.

The enzyme catalyses ATP-independent breakage of single-stranded DNA, followed by passage and rejoining.. Releases the supercoiling and torsional tension of DNA, which is introduced during the DNA replication and transcription, by transiently cleaving and rejoining one strand of the DNA duplex. Introduces a single-strand break via transesterification at a target site in duplex DNA. The scissile phosphodiester is attacked by the catalytic tyrosine of the enzyme, resulting in the formation of a DNA-(5'-phosphotyrosyl)-enzyme intermediate and the expulsion of a 3'-OH DNA strand. The free DNA strand then undergoes passage around the unbroken strand, thus removing DNA supercoils. Finally, in the religation step, the DNA 3'-OH attacks the covalent intermediate to expel the active-site tyrosine and restore the DNA phosphodiester backbone. This Shouchella clausii (strain KSM-K16) (Alkalihalobacillus clausii) protein is DNA topoisomerase 3.